The sequence spans 83 residues: DNA-directed RNA polymerase subunit Rpo5 (83 aa).

It belongs to the archaeal Rpo5/eukaryotic RPB5 RNA polymerase subunit family. As to quaternary structure, part of the RNA polymerase complex.

Its subcellular location is the cytoplasm. It catalyses the reaction RNA(n) + a ribonucleoside 5'-triphosphate = RNA(n+1) + diphosphate. In terms of biological role, DNA-dependent RNA polymerase (RNAP) catalyzes the transcription of DNA into RNA using the four ribonucleoside triphosphates as substrates. This is DNA-directed RNA polymerase subunit Rpo5 from Nitrosopumilus maritimus (strain SCM1).